The primary structure comprises 312 residues: Mas-related G-protein coupled receptor member E (312 aa).

The Extracellular portion of the chain corresponds to 1-20 (MMEPREAGQHVGAANGAQED). The helical transmembrane segment at 21–41 (VAFNLIILSLTEGLGLGGLLG) threads the bilayer. Topologically, residues 42 to 59 (NGAVLWLLSSNVYRNPFA) are cytoplasmic. Residues 60–80 (IYLLDVACADLIFLGCHMVAI) form a helical membrane-spanning segment. Residues 81 to 106 (VPDLLQGRLDFPGFVQTSLATLRFFC) lie on the Extracellular side of the membrane. The chain crosses the membrane as a helical span at residues 107-127 (YIVGLSLLAAVSVEQCLAALF). Residues 128–141 (PAWYSCRRPRHLTT) are Cytoplasmic-facing. A helical membrane pass occupies residues 142–162 (CVCALTWALCLLLHLLLSGAC). Topologically, residues 163–176 (TQFFGEPSRHLCRT) are extracellular. Residues 177–197 (LWLVAAVLLALLCCTMCGASL) traverse the membrane as a helical segment. Residues 198 to 217 (MLLLRVERGPQRPPPRGFPG) are Cytoplasmic-facing. Residues 218 to 238 (LILLTVLLFLFCGLPFGIYWL) form a helical membrane-spanning segment. At 239–241 (SRN) the chain is on the extracellular side. A helical transmembrane segment spans residues 242–262 (LLWYIPHYFYHFSFLMAAVHC). The Cytoplasmic portion of the chain corresponds to 263-312 (AAKPVVYFCLGSAQGRRLPLRLVLQRALGDEAELGAVRETSRRGLVDIAA).

This sequence belongs to the G-protein coupled receptor 1 family. Mas subfamily.

The protein resides in the cell membrane. Its function is as follows. Orphan receptor. May regulate nociceptor function and/or development, including the sensation or modulation of pain. The sequence is that of Mas-related G-protein coupled receptor member E (MRGPRE) from Homo sapiens (Human).